Consider the following 334-residue polypeptide: 6-phosphogluconolactonase (334 aa).

It belongs to the cycloisomerase 2 family.

The catalysed reaction is 6-phospho-D-glucono-1,5-lactone + H2O = 6-phospho-D-gluconate + H(+). Its pathway is carbohydrate degradation; pentose phosphate pathway; D-ribulose 5-phosphate from D-glucose 6-phosphate (oxidative stage): step 2/3. Its function is as follows. Catalyzes the hydrolysis of 6-phosphogluconolactone to 6-phosphogluconate. This is 6-phosphogluconolactonase from Buchnera aphidicola subsp. Acyrthosiphon pisum (strain 5A).